We begin with the raw amino-acid sequence, 163 residues long: Intron-encoded endonuclease I-PpoI (163 aa).

As to quaternary structure, homodimer. Requires Zn(2+) as cofactor.

In terms of biological role, mediates the homing of a group I intron in the ribosomal DNA. Makes a four-base staggered cut in its ribosomal DNA target sequence. The chain is Intron-encoded endonuclease I-PpoI from Physarum polycephalum (Slime mold).